The sequence spans 299 residues: Tyrosine recombinase XerC (299 aa).

One can recognise a Core-binding (CB) domain in the interval 1-85; sequence MERQLEAYCA…AVRGLYRYLN (85 aa). One can recognise a Tyr recombinase domain in the interval 106 to 285; it reads RLPKVLDTDR…DFQHLAAVYD (180 aa). Residues R146, K170, H237, R240, and H263 contribute to the active site. Y272 acts as the O-(3'-phospho-DNA)-tyrosine intermediate in catalysis.

This sequence belongs to the 'phage' integrase family. XerC subfamily. As to quaternary structure, forms a cyclic heterotetrameric complex composed of two molecules of XerC and two molecules of XerD.

The protein resides in the cytoplasm. Site-specific tyrosine recombinase, which acts by catalyzing the cutting and rejoining of the recombining DNA molecules. The XerC-XerD complex is essential to convert dimers of the bacterial chromosome into monomers to permit their segregation at cell division. It also contributes to the segregational stability of plasmids. The protein is Tyrosine recombinase XerC of Pseudomonas putida (strain W619).